A 234-amino-acid polypeptide reads, in one-letter code: tRNA1(Val) (adenine(37)-N6)-methyltransferase (234 aa).

Belongs to the methyltransferase superfamily. tRNA (adenine-N(6)-)-methyltransferase family.

The protein localises to the cytoplasm. It carries out the reaction adenosine(37) in tRNA1(Val) + S-adenosyl-L-methionine = N(6)-methyladenosine(37) in tRNA1(Val) + S-adenosyl-L-homocysteine + H(+). Specifically methylates the adenine in position 37 of tRNA(1)(Val) (anticodon cmo5UAC). The sequence is that of tRNA1(Val) (adenine(37)-N6)-methyltransferase from Aliivibrio fischeri (strain MJ11) (Vibrio fischeri).